Consider the following 186-residue polypeptide: 19 kDa globulin (186 aa).

An N-terminal signal peptide occupies residues 1 to 22 (MASKVVFFAAALMAAMVAISGA). The disordered stretch occupies residues 108–155 (PLEQGWSSSSSEYYGGEGSSSEQGYYGEGSSEEGYYGEQQQQPGMTRV). Residues 110 to 149 (EQGWSSSSSEYYGGEGSSSEQGYYGEGSSEEGYYGEQQQQ) are compositionally biased toward low complexity.

This sequence belongs to the 2S seed storage albumins family.

It localises to the secreted. Seed storage protein. The protein is 19 kDa globulin of Oryza sativa subsp. japonica (Rice).